The primary structure comprises 102 residues: Large ribosomal subunit protein uL24 (102 aa).

The protein belongs to the universal ribosomal protein uL24 family. In terms of assembly, part of the 50S ribosomal subunit.

One of two assembly initiator proteins, it binds directly to the 5'-end of the 23S rRNA, where it nucleates assembly of the 50S subunit. In terms of biological role, one of the proteins that surrounds the polypeptide exit tunnel on the outside of the subunit. The polypeptide is Large ribosomal subunit protein uL24 (Allorhizobium ampelinum (strain ATCC BAA-846 / DSM 112012 / S4) (Agrobacterium vitis (strain S4))).